The chain runs to 394 residues: uncharacterized protein (394 aa).

Residues 7 to 51 form the F-box domain; that stretch reads RKVIPNMPDLILRKIFDQYDYPVLCKMERVCRRWTNIINSKFRKE.

This is an uncharacterized protein from Caenorhabditis elegans.